The chain runs to 391 residues: Succinate--CoA ligase [ADP-forming] subunit beta (391 aa).

Positions 9–246 (KHLFADYDIP…ITQEDEAEVQ (238 aa)) constitute an ATP-grasp domain. ATP is bound by residues Lys-46, 53–55 (GRG), Glu-99, Leu-102, and Glu-107. Residues Asn-199 and Asp-213 each coordinate Mg(2+). Residues Asn-266 and 323–325 (GIV) each bind substrate.

Belongs to the succinate/malate CoA ligase beta subunit family. In terms of assembly, heterotetramer of two alpha and two beta subunits. Mg(2+) is required as a cofactor.

The enzyme catalyses succinate + ATP + CoA = succinyl-CoA + ADP + phosphate. It carries out the reaction GTP + succinate + CoA = succinyl-CoA + GDP + phosphate. It participates in carbohydrate metabolism; tricarboxylic acid cycle; succinate from succinyl-CoA (ligase route): step 1/1. Its function is as follows. Succinyl-CoA synthetase functions in the citric acid cycle (TCA), coupling the hydrolysis of succinyl-CoA to the synthesis of either ATP or GTP and thus represents the only step of substrate-level phosphorylation in the TCA. The beta subunit provides nucleotide specificity of the enzyme and binds the substrate succinate, while the binding sites for coenzyme A and phosphate are found in the alpha subunit. This is Succinate--CoA ligase [ADP-forming] subunit beta from Alkalilimnicola ehrlichii (strain ATCC BAA-1101 / DSM 17681 / MLHE-1).